We begin with the raw amino-acid sequence, 445 residues long: Protein cereblon (445 aa).

The segment at 1 to 48 is disordered; that stretch reads MAGEGDQQDAAHNMGNHLPLLPADSEDEDDEIEMEVEDQDSKEARKPN. The segment covering 24 to 38 has biased composition (acidic residues); the sequence is DSEDEDDEIEMEVED. Ser-25 is subject to Phosphoserine. The 239-residue stretch at 84-322 folds into the Lon N-terminal domain; sequence IPVLPEVLMI…CELDIMNKCT (239 aa). The CULT domain maps to 321 to 429; the sequence is CTSLCCKQCQ…LTRSALLPTI (109 aa). Zn(2+) is bound by residues Cys-326 and Cys-329. 3 residues coordinate (S)-thalidomide: His-381, Trp-383, and Trp-389. Cys-394 and Cys-397 together coordinate Zn(2+).

It belongs to the CRBN family. Component of a DCX (DDB1-CUL4-X-box) protein ligase complex, at least composed of CRBN, CUL4A, DDB1 and RBX1. Interacts directly with DDB1. Interacts with KCNT1. Interacts with ILF2. Interacts with TRAF6 and ECSIT. Post-translationally, ubiquitinated, ubiquitination is mediated by its own DCX protein ligase complex. In terms of tissue distribution, highly expressed in brain.

The protein localises to the cytoplasm. The protein resides in the nucleus. It localises to the membrane. Its pathway is protein modification; protein ubiquitination. Substrate recognition component of a DCX (DDB1-CUL4-X-box) E3 protein ligase complex that mediates the ubiquitination and subsequent proteasomal degradation of target proteins, such as MEIS2, ILF2 or GLUL. Normal degradation of key regulatory proteins is required for normal limb outgrowth and expression of the fibroblast growth factor FGF8. Maintains presynaptic glutamate release and consequently, cognitive functions such as memory and learning, by negatively regulating large-conductance calcium-activated potassium (BK) channels in excitatory neurons. Likely to function by regulating the assembly and neuronal surface expression of BK channels via its interaction with KCNT1. May also be involved in regulating anxiety-like behaviors via a BK channel-independent mechanism. Plays a negative role in TLR4 signaling by interacting with TRAF6 and ECSIT, leading to inhibition of ECSIT ubiquitination, an important step of the signaling. The protein is Protein cereblon (Crbn) of Mus musculus (Mouse).